Consider the following 499-residue polypeptide: Probable cytosol aminopeptidase (499 aa).

The Mn(2+) site is built by Lys264 and Asp269. Residue Lys276 is part of the active site. Residues Asp287, Asp346, and Glu348 each contribute to the Mn(2+) site. Residue Arg350 is part of the active site.

Belongs to the peptidase M17 family. It depends on Mn(2+) as a cofactor.

The protein localises to the cytoplasm. It catalyses the reaction Release of an N-terminal amino acid, Xaa-|-Yaa-, in which Xaa is preferably Leu, but may be other amino acids including Pro although not Arg or Lys, and Yaa may be Pro. Amino acid amides and methyl esters are also readily hydrolyzed, but rates on arylamides are exceedingly low.. The enzyme catalyses Release of an N-terminal amino acid, preferentially leucine, but not glutamic or aspartic acids.. In terms of biological role, presumably involved in the processing and regular turnover of intracellular proteins. Catalyzes the removal of unsubstituted N-terminal amino acids from various peptides. The chain is Probable cytosol aminopeptidase from Rhodopseudomonas palustris (strain BisB18).